The chain runs to 201 residues: Recombination protein RecR (201 aa).

The segment at 57 to 72 (CADCRTFTEQEHCTIC) adopts a C4-type zinc-finger fold. One can recognise a Toprim domain in the interval 81–176 (GQICVVESPA…LASRIAHGVP (96 aa)).

This sequence belongs to the RecR family.

Functionally, may play a role in DNA repair. It seems to be involved in an RecBC-independent recombinational process of DNA repair. It may act with RecF and RecO. This Yersinia pestis bv. Antiqua (strain Antiqua) protein is Recombination protein RecR.